Reading from the N-terminus, the 559-residue chain is TBC1 domain family member 24 (559 aa).

Residues Lys36, Arg40, Lys238, Arg242, and 293-297 (RLFSR) each bind a 1,2-diacyl-sn-glycero-3-phospho-(1D-myo-inositol). A Rab-GAP TBC domain is found at 47–262 (SHALRGKVYQ…KVRAGQPLES (216 aa)). Residues 343-554 (EIVSVREMRD…IAAVEAWGFQ (212 aa)) form the TLDc domain. Phosphoserine is present on residues Ser473 and Ser480.

As to quaternary structure, interacts with ARF6. In terms of tissue distribution, highest expression in brain.

It is found in the cell membrane. The protein localises to the cytoplasm. It localises to the cytoplasmic vesicle membrane. Its subcellular location is the presynapse. In terms of biological role, may act as a GTPase-activating protein for Rab family protein(s). Involved in neuronal projections development, probably through a negative modulation of ARF6 function. Involved in the regulation of synaptic vesicle trafficking. The protein is TBC1 domain family member 24 (TBC1D24) of Homo sapiens (Human).